The following is a 145-amino-acid chain: Large ribosomal subunit protein uL15 (145 aa).

Composition is skewed to basic residues over residues 1–13 (MIRK…KQRG) and 22–33 (TKKRRGAGHRGG). Residues 1–41 (MIRKTKKIRKQRGSRSVGGGCTKKRRGAGHRGGRGQAGGNK) are disordered.

Belongs to the universal ribosomal protein uL15 family. In terms of assembly, part of the 50S ribosomal subunit.

Functionally, binds to the 23S rRNA. The chain is Large ribosomal subunit protein uL15 from Methanosphaera stadtmanae (strain ATCC 43021 / DSM 3091 / JCM 11832 / MCB-3).